Here is a 157-residue protein sequence, read N- to C-terminus: 17.6 kDa class I heat shock protein 3 (157 aa).

Positions 43 to 157 constitute a sHSP domain; it reads DVAAFTNAKV…PEVKSIDISG (115 aa).

Belongs to the small heat shock protein (HSP20) family. As to quaternary structure, may form oligomeric structures.

The protein resides in the cytoplasm. The chain is 17.6 kDa class I heat shock protein 3 (HSP17.6C) from Arabidopsis thaliana (Mouse-ear cress).